The chain runs to 214 residues: Protein OPG176 (214 aa).

Belongs to the orthopoxvirus OPG176 family. As to quaternary structure, tetramer. Interacts with host MYD88, TRF4, TICAM2 and MAL.

BCL2-like protein which disrupts the host immune response by inhibiting the TLR4 signaling pathway leading to NF-kappa-B activation. Acts close to the plasma membrane and targets several host TIR-domain containing adapter proteins including MYD88, TIRAP, TRIF and TICAM2. In turn, blocks the host NF-kappa-B and TRIF-mediated IRF3 activation. The protein is Protein OPG176 (OPG176) of Homo sapiens (Human).